The primary structure comprises 634 residues: Chaperone protein dnaK2 (634 aa).

T197 carries the post-translational modification Phosphothreonine; by autocatalysis. A compositionally biased stretch (low complexity) spans 601–620; sequence SAEASANAQAGPSSSSSSSS. The tract at residues 601–634 is disordered; the sequence is SAEASANAQAGPSSSSSSSSGDDDVIDAEFSESK. Residues 621–634 are compositionally biased toward acidic residues; the sequence is GDDDVIDAEFSESK.

This sequence belongs to the heat shock protein 70 family.

Acts as a chaperone. This Synechococcus elongatus (strain ATCC 33912 / PCC 7942 / FACHB-805) (Anacystis nidulans R2) protein is Chaperone protein dnaK2 (dnaK2).